We begin with the raw amino-acid sequence, 479 residues long: Calcium/calmodulin-dependent protein kinase type II delta chain (479 aa).

Residues 14 to 272 form the Protein kinase domain; the sequence is YQLFEELGKG…ASEALKHPWI (259 aa). ATP-binding positions include 20–28 and Lys-43; that span reads LGKGAFSVV. Asp-136 functions as the Proton acceptor in the catalytic mechanism. Thr-287 carries the phosphothreonine modification. A phosphoserine mark is found at Ser-315 and Ser-319. Phosphothreonine is present on Thr-337.

The protein belongs to the protein kinase superfamily. CAMK Ser/Thr protein kinase family. CaMK subfamily. As to quaternary structure, CAMK2 is composed of four different chains: alpha, beta, gamma, and delta. The different isoforms assemble into homo- or heteromultimeric holoenzymes composed of 8 to 12 subunits.

It carries out the reaction L-seryl-[protein] + ATP = O-phospho-L-seryl-[protein] + ADP + H(+). It catalyses the reaction L-threonyl-[protein] + ATP = O-phospho-L-threonyl-[protein] + ADP + H(+). With respect to regulation, autophosphorylation of CAMK2 plays an important role in the regulation of the kinase activity. Its function is as follows. CaM-kinase II (CAMK2) is a prominent kinase in the central nervous system. This chain is Calcium/calmodulin-dependent protein kinase type II delta chain (CAMK2D), found in Gallus gallus (Chicken).